The chain runs to 255 residues: MATIGALVLRFFFIAVLMSSQKSWAIKEEHTIIQAEFYLLPDKRGEFMFDFDGDEIFHVDIEKSETIWRLEEFAKFASFEAQGALANIAVDKANLDVMKERSNNTPDANVAPEVTVLSRSPVNLGEPNILICFIDKFSPPVVNVTWLRNGRPVTEGVSETVFLPRDDHLFRKFHYLTFLPSTDDFYDCEVDHWGLEEPLRKTWEFEEKTLLPETKENVMCALGLFVGLVGIVVGIILIMKGIKKRNVVERRQGAL.

A signal peptide spans 1-25 (MATIGALVLRFFFIAVLMSSQKSWA). The tract at residues 26–109 (IKEEHTIIQA…ERSNNTPDAN (84 aa)) is alpha-1. Over 26-216 (IKEEHTIIQA…EKTLLPETKE (191 aa)) the chain is Extracellular. The segment at 110 to 203 (VAPEVTVLSR…GLEEPLRKTW (94 aa)) is alpha-2. In terms of domain architecture, Ig-like C1-type spans 112-204 (PEVTVLSRSP…LEEPLRKTWE (93 aa)). Cysteines 132 and 188 form a disulfide. An N-linked (GlcNAc...) asparagine glycan is attached at N143. The connecting peptide stretch occupies residues 204 to 216 (EFEEKTLLPETKE). The helical transmembrane segment at 217 to 242 (NVMCALGLFVGLVGIVVGIILIMKGI) threads the bilayer. Over 243-255 (KKRNVVERRQGAL) the chain is Cytoplasmic.

This sequence belongs to the MHC class II family.

Its subcellular location is the membrane. The protein is H-2 class II histocompatibility antigen, E-D alpha chain (H2-Ea) of Mus musculus (Mouse).